Here is a 938-residue protein sequence, read N- to C-terminus: TFIIH basal transcription factor complex helicase/translocase XPB subunit (938 aa).

The Helicase ATP-binding domain occupies 394–562; the sequence is FRSGNKAHQG…DLRHLVGPKL (169 aa). 407–414 serves as a coordination point for ATP; it reads LPCGAGKT. Positions 515–518 match the DEVH box motif; the sequence is DEVH. The Helicase C-terminal domain maps to 627-781; that stretch reads WCTQALLEFH…SYRVLQSDMV (155 aa).

Belongs to the helicase family. RAD25/XPB subfamily. In terms of assembly, component of the 7-subunit TFIIH core complex composed of XPB, XPD, SSL1, TFB1, TFB2, TFB4 and TFB5.

It carries out the reaction Couples ATP hydrolysis with the unwinding of duplex DNA by translocating in the 3'-5' direction.. It catalyses the reaction ATP + H2O = ADP + phosphate + H(+). In terms of biological role, ATP-dependent 3'-5' DNA helicase/translocase; binds dsDNA rather than ssDNA, unzipping it in a translocase rather than classical helicase activity. Component of the general transcription factor IIH (TFIIH) core complex, involved in spliced leader RNA (SL RNA) gene transcription by RNA polymerase II. TFIIH has an essential role in transcription initiation. When the pre-initiation complex (PIC) has been established, TFIIH is required for promoter opening and promoter escape. The ATPase activity of XPB is required for promoter opening and promoter escape. This chain is TFIIH basal transcription factor complex helicase/translocase XPB subunit, found in Trypanosoma brucei brucei (strain 927/4 GUTat10.1).